Consider the following 429-residue polypeptide: Probable exoglucanase GH6D (429 aa).

Positions 1 to 17 (MRAVYAILAGLLATGSA) are cleaved as a signal peptide. Substrate is bound by residues Trp75 and Ser77. Residues Asp115 and Asp162 each act as proton donor in the active site. 2 residues coordinate substrate: Asn206 and Trp209. N-linked (GlcNAc...) asparagine glycosylation occurs at Asn237. 4 residues coordinate substrate: Asn240, Trp300, Lys328, and Glu332. The interval 240–261 (NYNPYSTNNPPPYTAGSPSADE) is disordered. Residues 362 to 390 (PEIRADGGGGGSPAPGPSSTAVAPSPSAT) form a disordered region. A compositionally biased stretch (low complexity) spans 378–390 (PSSTAVAPSPSAT). One can recognise a CBM1 domain in the interval 394–429 (NCAARWAQCGGQGWTGPTCCAQGTCQASNQWYSQCL).

This sequence belongs to the glycosyl hydrolase 6 (cellulase B) family.

The protein localises to the secreted. Functionally, probable exoglucanase that may play an important function in biomass degradation by catalyzing the hydrolysis of cellulose. The protein is Probable exoglucanase GH6D of Podospora anserina (strain S / ATCC MYA-4624 / DSM 980 / FGSC 10383) (Pleurage anserina).